The chain runs to 301 residues: Envoplakin-like protein (301 aa).

Positions 1 to 88 form a coiled coil; sequence MQASADQVER…ERVTQECAEY (88 aa). Disordered regions lie at residues 18–41 and 118–166; these read RLQQ…TGSS and GLRR…PEPI. Polar residues predominate over residues 26–41; that stretch reads SEQSQALQHQQETGSS. Over residues 136–151 the composition is skewed to basic and acidic residues; the sequence is GAQHRAEGDQRPRRAA.

This sequence belongs to the plakin or cytolinker family.

This Homo sapiens (Human) protein is Envoplakin-like protein (EVPLL).